Consider the following 192-residue polypeptide: UPF0301 protein Bamb_0737 (192 aa).

It belongs to the UPF0301 (AlgH) family.

The protein is UPF0301 protein Bamb_0737 of Burkholderia ambifaria (strain ATCC BAA-244 / DSM 16087 / CCUG 44356 / LMG 19182 / AMMD) (Burkholderia cepacia (strain AMMD)).